The primary structure comprises 470 residues: Adenosylhomocysteinase (470 aa).

Substrate-binding residues include threonine 61, aspartate 136, and glutamate 196. Position 197–199 (197–199 (TTT)) interacts with NAD(+). Lysine 226 and aspartate 230 together coordinate substrate. NAD(+) is bound by residues asparagine 231, 260 to 265 (GYGDVG), glutamate 283, asparagine 318, 339 to 341 (IGH), and asparagine 384.

Belongs to the adenosylhomocysteinase family. It depends on NAD(+) as a cofactor.

The protein localises to the cytoplasm. The enzyme catalyses S-adenosyl-L-homocysteine + H2O = L-homocysteine + adenosine. Its pathway is amino-acid biosynthesis; L-homocysteine biosynthesis; L-homocysteine from S-adenosyl-L-homocysteine: step 1/1. Functionally, may play a key role in the regulation of the intracellular concentration of adenosylhomocysteine. The chain is Adenosylhomocysteinase from Aromatoleum aromaticum (strain DSM 19018 / LMG 30748 / EbN1) (Azoarcus sp. (strain EbN1)).